We begin with the raw amino-acid sequence, 171 residues long: 3-hydroxydecanoyl-[acyl-carrier-protein] dehydratase (171 aa).

His70 is an active-site residue.

It belongs to the thioester dehydratase family. FabA subfamily. In terms of assembly, homodimer.

It localises to the cytoplasm. It carries out the reaction a (3R)-hydroxyacyl-[ACP] = a (2E)-enoyl-[ACP] + H2O. The enzyme catalyses (3R)-hydroxydecanoyl-[ACP] = (2E)-decenoyl-[ACP] + H2O. It catalyses the reaction (2E)-decenoyl-[ACP] = (3Z)-decenoyl-[ACP]. Its pathway is lipid metabolism; fatty acid biosynthesis. Its function is as follows. Necessary for the introduction of cis unsaturation into fatty acids. Catalyzes the dehydration of (3R)-3-hydroxydecanoyl-ACP to E-(2)-decenoyl-ACP and then its isomerization to Z-(3)-decenoyl-ACP. Can catalyze the dehydratase reaction for beta-hydroxyacyl-ACPs with saturated chain lengths up to 16:0, being most active on intermediate chain length. The sequence is that of 3-hydroxydecanoyl-[acyl-carrier-protein] dehydratase from Xanthomonas euvesicatoria pv. vesicatoria (strain 85-10) (Xanthomonas campestris pv. vesicatoria).